The following is a 783-amino-acid chain: Coiled-coil domain-containing protein 30 (783 aa).

Basic and acidic residues predominate over residues 1-22 (MSQEKNEMFESEWSKEREREKQ). Disordered regions lie at residues 1–26 (MSQE…LASG), 101–191 (LGGK…LTMK), and 209–231 (LLQS…SSGE). A coiled-coil region spans residues 22 to 98 (QLASGLDTAE…LSQEFAQLNH (77 aa)). The segment covering 106–115 (APSNLITSEN) has biased composition (polar residues). A compositionally biased stretch (basic and acidic residues) spans 131–191 (IQSRKEETEE…EEKEQQLTMK (61 aa)). Coiled coils occupy residues 165-497 (REGQ…LNVH) and 527-622 (DKRI…RIIR). The disordered stretch occupies residues 731-755 (EEIKSKEAMASSKSPEKSPENLVCS).

The protein belongs to the prefoldin subunit beta family. In terms of tissue distribution, expressed in brain, kidney, pancreas, placenta, liver, thymus and prostate.

This Homo sapiens (Human) protein is Coiled-coil domain-containing protein 30 (CCDC30).